A 423-amino-acid chain; its full sequence is Maltoporin 1 (423 aa).

The signal sequence occupies residues 1–24 (MITLRKLPIALAVAAGVLSTQAMA).

Belongs to the porin LamB (TC 1.B.3) family. As to quaternary structure, homotrimer formed of three 18-stranded antiparallel beta-barrels, containing three independent channels.

It localises to the cell outer membrane. It catalyses the reaction beta-maltose(in) = beta-maltose(out). In terms of biological role, involved in the transport of maltose and maltodextrins. The polypeptide is Maltoporin 1 (Yersinia pestis bv. Antiqua (strain Antiqua)).